Reading from the N-terminus, the 227-residue chain is UPF0758 protein lpl2409 (227 aa).

Residues 102–225 (RLSNTQQTYA…YSIFAENKWA (124 aa)) form the MPN domain. 3 residues coordinate Zn(2+): His-173, His-175, and Asp-186. The short motif at 173–186 (HNHPSGLSDASQQD) is the JAMM motif element.

It belongs to the UPF0758 family.

This is UPF0758 protein lpl2409 from Legionella pneumophila (strain Lens).